The chain runs to 201 residues: UPF0376 protein F10G2.1 (201 aa).

At 1 to 3 (MKH) the chain is on the cytoplasmic side. The helical; Signal-anchor for type II membrane protein transmembrane segment at 4–24 (FLLLAIIGILFLGSTYGASVA) threads the bilayer. At 25–201 (TEKLKASNCT…LLECDFRNIQ (177 aa)) the chain is on the extracellular side. N-linked (GlcNAc...) asparagine glycosylation is found at Asn32 and Asn124.

Belongs to the UPF0376 family.

The protein localises to the membrane. This chain is UPF0376 protein F10G2.1, found in Caenorhabditis elegans.